Here is a 1162-residue protein sequence, read N- to C-terminus: PAN2-PAN3 deadenylation complex catalytic subunit PAN2 (1162 aa).

WD repeat units follow at residues 27-66, 153-193, 196-233, and 300-339; these read AKEKSATKMAFDQDVNLIWVGDTYGRVSSYDPSYSLYTRH, NTVQ…VVKT, GHSCMVSSMDFRDHTLVTAGKSKRFNMMYPDQFVNVYD, and HPCQSVTQLQLSPSGDYIAFIEHDNNINMWSRSNGMTGFT. Positions 341-491 are linker; the sequence is TATTILEYPD…LMNYKPSNDR (151 aa). The segment at 401 to 443 is disordered; that stretch reads VPLPPKSSAASSSHTALSTSSDSRPNTARSGNPSSGGQKYRLL. A compositionally biased stretch (low complexity) spans 407-423; that stretch reads SSAASSSHTALSTSSDS. The segment covering 424 to 437 has biased composition (polar residues); it reads RPNTARSGNPSSGG. Residues 492–904 enclose the USP domain; the sequence is EVPPAFTKLQ…TPEIAIYSDA (413 aa). In terms of domain architecture, Exonuclease spans 956–1126; it reads VALDAEFVAL…IEDAYTALVL (171 aa). Residues Asp-959, Glu-961, Asp-1068, and Asp-1119 each contribute to the a divalent metal cation site.

Belongs to the peptidase C19 family. PAN2 subfamily. Forms a heterotrimer with an asymmetric homodimer of the regulatory subunit PAN3 to form the poly(A)-nuclease (PAN) deadenylation complex. It depends on a divalent metal cation as a cofactor.

It localises to the cytoplasm. It catalyses the reaction Exonucleolytic cleavage of poly(A) to 5'-AMP.. Its activity is regulated as follows. Positively regulated by the regulatory subunit PAN3. Functionally, catalytic subunit of the poly(A)-nuclease (PAN) deadenylation complex, one of two cytoplasmic mRNA deadenylases involved in mRNA turnover. PAN specifically shortens poly(A) tails of RNA and the activity is stimulated by poly(A)-binding protein PAB1. PAN deadenylation is followed by rapid degradation of the shortened mRNA tails by the CCR4-NOT complex. Deadenylated mRNAs are then degraded by two alternative mechanisms, namely exosome-mediated 3'-5' exonucleolytic degradation, or deadenylation-dependent mRNA decaping and subsequent 5'-3' exonucleolytic degradation by XRN1. May also be involved in post-transcriptional maturation of mRNA poly(A) tails. This is PAN2-PAN3 deadenylation complex catalytic subunit PAN2 from Eremothecium gossypii (strain ATCC 10895 / CBS 109.51 / FGSC 9923 / NRRL Y-1056) (Yeast).